The sequence spans 490 residues: Betaine aldehyde dehydrogenase (490 aa).

Asp93 contacts K(+). 150–152 (GAW) lines the NAD(+) pocket. Catalysis depends on Lys162, which acts as the Charge relay system. 176-179 (KPSE) is an NAD(+) binding site. Position 180 (Val180) interacts with K(+). 230–233 (GIAS) provides a ligand contact to NAD(+). Leu246 contributes to the K(+) binding site. Glu252 functions as the Proton acceptor in the catalytic mechanism. 3 residues coordinate NAD(+): Gly254, Cys286, and Glu387. Cys286 acts as the Nucleophile in catalysis. Cys286 carries the cysteine sulfenic acid (-SOH) modification. K(+)-binding residues include Lys457 and Gly460. Glu464 functions as the Charge relay system in the catalytic mechanism.

It belongs to the aldehyde dehydrogenase family. Dimer of dimers. It depends on K(+) as a cofactor.

It catalyses the reaction betaine aldehyde + NAD(+) + H2O = glycine betaine + NADH + 2 H(+). The protein operates within amine and polyamine biosynthesis; betaine biosynthesis via choline pathway; betaine from betaine aldehyde: step 1/1. Its function is as follows. Involved in the biosynthesis of the osmoprotectant glycine betaine. Catalyzes the irreversible oxidation of betaine aldehyde to the corresponding acid. In Yersinia pestis, this protein is Betaine aldehyde dehydrogenase.